An 87-amino-acid polypeptide reads, in one-letter code: Small ribosomal subunit protein uS15c (87 aa).

Belongs to the universal ribosomal protein uS15 family. As to quaternary structure, part of the 30S ribosomal subunit.

It is found in the plastid. The protein localises to the chloroplast. The protein is Small ribosomal subunit protein uS15c (rps15) of Oenothera biennis (German evening primrose).